Consider the following 209-residue polypeptide: Orotate phosphoribosyltransferase (209 aa).

5-phospho-alpha-D-ribose 1-diphosphate is bound by residues Arg96, Lys100, His102, and 122–130; that span reads EDLISTGGS. Ser126 serves as a coordination point for orotate.

The protein belongs to the purine/pyrimidine phosphoribosyltransferase family. PyrE subfamily. In terms of assembly, homodimer. The cofactor is Mg(2+).

The catalysed reaction is orotidine 5'-phosphate + diphosphate = orotate + 5-phospho-alpha-D-ribose 1-diphosphate. The protein operates within pyrimidine metabolism; UMP biosynthesis via de novo pathway; UMP from orotate: step 1/2. Its function is as follows. Catalyzes the transfer of a ribosyl phosphate group from 5-phosphoribose 1-diphosphate to orotate, leading to the formation of orotidine monophosphate (OMP). The polypeptide is Orotate phosphoribosyltransferase (Lactococcus lactis subsp. cremoris (strain MG1363)).